We begin with the raw amino-acid sequence, 192 residues long: uncharacterized protein (192 aa).

The helical; Signal-anchor transmembrane segment at 7–29 (FIHSISGGSSLLSASEVFASAFF) threads the bilayer. A helical transmembrane segment spans residues 51-67 (YFLCVLVSTFLNSLVII).

It is found in the membrane. This is an uncharacterized protein from Saccharomyces cerevisiae (strain ATCC 204508 / S288c) (Baker's yeast).